Reading from the N-terminus, the 405-residue chain is MEEERENTNSIYIVSELLEEIFLGLPLKSILKFKTVSKQWRSILESNLFVERRRTLQKNHPKILAAYNCDYCTRPGILPKSQFEGDEEIVYLHTDATQPSMTCDGLVCITEPGWFNVLNVSTGQLRRFLPGPDPGPQANWLLGFGRDKVTGKYKIVRMCFHDCYEFGILDIESGEWSKLMSPPHIMRVGSKSVCVNGSIYWLQISVSYIILALDLHQETFNGVYHLPATWVTQDTQLVNLEDRLAMAMTTKVGPEWILEIWSMDIEEKGWSKRYTWSKAYSISLAHRVVVSWPWQKRWFTPVSVSKQGNLVFYDNHKRLFKYYSGTDEIRCLSSNINVISSYVENLAPLPLKPSHTHHDLGNSNSKFSTSRCHLFPTRGSWISKVFRRNVLFTSLVVVGYIYLPL.

Positions 7 to 53 (NTNSIYIVSELLEEIFLGLPLKSILKFKTVSKQWRSILESNLFVERR) constitute an F-box domain. Kelch repeat units follow at residues 146–197 (RDKV…CVNG) and 356–400 (THHD…VVGY).

The chain is F-box/kelch-repeat protein At2g43445 from Arabidopsis thaliana (Mouse-ear cress).